The primary structure comprises 363 residues: Alanine racemase (363 aa).

K39 (proton acceptor; specific for D-alanine) is an active-site residue. N6-(pyridoxal phosphate)lysine is present on K39. R134 contacts substrate. The Proton acceptor; specific for L-alanine role is filled by Y251. Residue M299 coordinates substrate.

It belongs to the alanine racemase family. Requires pyridoxal 5'-phosphate as cofactor.

It catalyses the reaction L-alanine = D-alanine. The protein operates within amino-acid biosynthesis; D-alanine biosynthesis; D-alanine from L-alanine: step 1/1. In terms of biological role, catalyzes the interconversion of L-alanine and D-alanine. May also act on other amino acids. This is Alanine racemase (alr) from Thermodesulfovibrio yellowstonii (strain ATCC 51303 / DSM 11347 / YP87).